The primary structure comprises 103 residues: MSKQRIRIRLKAFDHRLIDRSASEIVETAKRTGARVKGPIPLPTKMERFTVLISPHVNKDARDQYEIRTHKRLMDIMDPTDKTVDALMKLDLAAGVDVQIKLN.

This sequence belongs to the universal ribosomal protein uS10 family. Part of the 30S ribosomal subunit.

Its function is as follows. Involved in the binding of tRNA to the ribosomes. This is Small ribosomal subunit protein uS10 from Thioalkalivibrio sulfidiphilus (strain HL-EbGR7).